The chain runs to 1003 residues: Pumilio homolog 4 (1003 aa).

The interval 38–65 (QHRNQQSFGRERERDIDVHRSGSAPPTV) is disordered. Positions 46 to 57 (GRERERDIDVHR) are enriched in basic and acidic residues. Serine 225 is modified (phosphoserine). Over residues 285–300 (KNSPNTMLGSTMSSPV) the composition is skewed to polar residues. Positions 285 to 328 (KNSPNTMLGSTMSSPVPRNRTPDSHLVGRSTASGLPPIGTRVGP) are disordered. At threonine 305 the chain carries Phosphothreonine. The region spanning 644-984 (AEASLLEGFK…HIVARVEKLI (341 aa)) is the PUM-HD domain. Pumilio repeat units follow at residues 664 to 699 (EIVGHVIEFSMDQYGSRFIQQKLETATDEEKNAIFP), 700 to 735 (EILPYGRTLMTDVFGNYVIQKFFEHGTTKQRKELAE), 736 to 771 (QVTGHVLALSLQMYGCRVIQKALEVVELEQQARMVK), 772 to 807 (ELDGSVMKCVHDQNGNHVIQKCIERLPQDWIQFIIS), 808 to 843 (SFYGKVLALSTHPYGCRVIQRVLEHIDDIETQRIIM), 845 to 880 (EIMDSVCTLAQDQYGNYVIQHIIQHGKPHERSEIIN), 881 to 916 (KLAGQIVKMSQQKFASNVVEKCLTFGGPEERQVLVN), and 917 to 958 (EMLG…LILS).

It localises to the cytoplasm. Its function is as follows. Sequence-specific RNA-binding protein that regulates translation and mRNA stability by binding the 3'-UTR of target mRNAs. Binds the APUM-binding elements (APBEs) in the 3'-UTR mRNA sequence of CLV1, PNH, WUS and FAS2. The protein is Pumilio homolog 4 (APUM4) of Arabidopsis thaliana (Mouse-ear cress).